The chain runs to 772 residues: Angiomotin-like protein 2 (772 aa).

3 disordered regions span residues 41–158 (GGAG…HVRS), 170–239 (RNGA…SPHF), and 260–299 (QYQY…PSAQ). Composition is skewed to basic and acidic residues over residues 80–91 (QGGETHLAENRL), 100–112 (KGEE…EAKA), and 142–153 (RRQDEALRELRH). A required for interaction with CDH5 region spans residues 101 to 303 (GEELPTYEEA…GPPSAQATLG (203 aa)). Position 107 is a phosphotyrosine; by FGFR1 (Tyr-107). The span at 178-191 (HMSSSHSFPQLARS) shows a compositional bias: polar residues. The segment covering 197–214 (PRGPPAEGPEPRGPPPQY) has biased composition (pro residues). The segment at 221-303 (QETAAVTDPR…GPPSAQATLG (83 aa)) is required for interaction with CDH1. Positions 305 to 578 (AHLAQMETVL…KYLEERAMRQ (274 aa)) form a coiled coil. Residues Lys-343 and Lys-404 each participate in a glycyl lysine isopeptide (Lys-Gly) (interchain with G-Cter in ubiquitin) cross-link. Disordered stretches follow at residues 596–615 (IRHS…LLPG) and 680–752 (GLVS…RTPS). Basic and acidic residues predominate over residues 686–699 (RQTDARPAGDRVPA). Positions 718-733 (DGSTQTDGPADNTSAC) are enriched in polar residues. Ser-752 and Ser-755 each carry phosphoserine. The PDZ-binding motif lies at 769–772 (EILI).

The protein belongs to the angiomotin family. As to quaternary structure, part of a complex composed of AMOTL2, MAGI1 and CDH5, within the complex AMOTL2 acts as a scaffold protein for the interaction of MAGI1 with CDH5. The complex is required for coupling actin fibers to cell junctions in endothelial cells. Within the complex AMOTL2 (via its N-terminus) interacts with CDH5. Interacts (via N-terminus) with MAGI1. Interacts (via N-terminus) with ACTB; the interaction facilitates binding of cell junction complexes to actin fibers in endothelial cells. Interacts with CDH1; the interaction may facilitate binding of radial actin fibers to cell junction complexes. Interacts with SRC. Interacts with YAP1; the interaction is required for ubiquitination of AMOTL2 and localization of YAP1 to tight junctions. Interacts with WWP1; the interaction facilitates WWP1 interaction with the Crumbs complex and subsequent WWP1 translocation to the plasma membrane. WWP1 interaction with the Crumbs complex promotes WWP1 monoubiquitination of AMOTL2 which subsequently activates the Hippo signaling pathway. When ubiquitinated interacts with LATS2 (via UBA domain); the interaction promotes LATS2 phosphorylation of YAP1. Interacts (via PPXY motif) with WWTR1/TAZ (via WW domain); the interaction promotes WWTR1/TAZ localization to the cytoplasm and thereby inhibition of its transcriptional properties. Interacts with PHLDB2; interaction may facilitate PHLDB2 localization to the myotube podosome cortex that surrounds the core. Phosphorylation at Tyr-107 is necessary for efficient binding to SRC and synergistically functioning with SRC to activate the downstream MAPK pathway. Post-translationally, monoubiquitinated at Lys-343 and Lys-404 by Crumbs complex-bound WWP1. De-ubiquitinated at Lys-343 and Lys-404 by USP9X; the interaction may be promoted by cell contact inhibition. Deubiquitination of AMOTL2 negatively regulates Hippo signaling activation. As to expression, expressed in skeletal muscle at neuromuscular junctions (at protein level).

The protein resides in the recycling endosome. The protein localises to the cytoplasm. It localises to the cell projection. It is found in the podosome. Its subcellular location is the cell junction. In terms of biological role, regulates the translocation of phosphorylated SRC to peripheral cell-matrix adhesion sites. Required for proper architecture of actin filaments. Plays a role in coupling actin fibers to cell junctions in endothelial cells and is therefore required for correct endothelial cell morphology via facilitating transcellular transmission of mechanical force resulting in endothelial cell elongation. Required for the anchoring of radial actin fibers to CDH1 junction complexes at the cell membrane which facilitates organization of radial actin fiber structure and cellular response to contractile forces. This contributes to maintenance of cell area, size, shape, epithelial sheet organization and trophectoderm cell properties that facilitate blastocyst zona hatching. Inhibits the Wnt/beta-catenin signaling pathway, probably by recruiting CTNNB1 to recycling endosomes and hence preventing its translocation to the nucleus. Participates in angiogenesis. Activates the Hippo signaling pathway in response to cell contact inhibition via interaction with and ubiquitination by Crumbs complex-bound WWP1. Ubiquitinated AMOTL2 then interacts with LATS2 which in turn phosphorylates YAP1, excluding it from the nucleus and localizing it to the cytoplasm and tight junctions, therefore ultimately repressing YAP1-driven transcription of target genes. Acts to inhibit WWTR1/TAZ transcriptional coactivator activity via sequestering WWTR1/TAZ in the cytoplasm and at tight junctions. Regulates the size and protein composition of the podosome cortex and core at myofibril neuromuscular junctions. Selectively promotes FGF-induced MAPK activation through SRC. May play a role in the polarity, proliferation and migration of endothelial cells. This Mus musculus (Mouse) protein is Angiomotin-like protein 2.